A 442-amino-acid chain; its full sequence is Gamma-glutamyl phosphate reductase (442 aa).

The protein belongs to the gamma-glutamyl phosphate reductase family.

It localises to the cytoplasm. It carries out the reaction L-glutamate 5-semialdehyde + phosphate + NADP(+) = L-glutamyl 5-phosphate + NADPH + H(+). It participates in amino-acid biosynthesis; L-proline biosynthesis; L-glutamate 5-semialdehyde from L-glutamate: step 2/2. Catalyzes the NADPH-dependent reduction of L-glutamate 5-phosphate into L-glutamate 5-semialdehyde and phosphate. The product spontaneously undergoes cyclization to form 1-pyrroline-5-carboxylate. This Campylobacter curvus (strain 525.92) protein is Gamma-glutamyl phosphate reductase.